The sequence spans 594 residues: Type I restriction enzyme EcoEI specificity subunit (594 aa).

Belongs to the type-I restriction system S methylase family. As to quaternary structure, the type I restriction/modification system is composed of three polypeptides R, M and S; the restriction enzyme has stoichiometry R(2)M(2)S(1) while the methyltransferase is M(2)S(1).

The specificity (S) subunit of a type I restriction enzyme; this subunit dictates DNA sequence specificity. The M and S subunits together form a methyltransferase (MTase) that methylates two adenine residues of the sequence 5'-GAGN(7)ATGC-3'. In the presence of the R subunit the complex can also act as an endonuclease, binding to the same target sequence but cutting the DNA some distance from this site. Whether the DNA is cut or modified depends on the methylation state of the target sequence. When the target site is unmodified, the DNA is cut. When the target site is hemimethylated, the complex acts as a maintenance MTase modifying the DNA so that both strands become methylated. After locating a non-methylated recognition site, the enzyme complex serves as a molecular motor that translocates DNA in an ATP-dependent manner until a collision occurs that triggers cleavage. The protein is Type I restriction enzyme EcoEI specificity subunit of Escherichia coli.